Consider the following 349-residue polypeptide: Biotin synthase (349 aa).

Residues 1 to 11 (MLEGIEREAAE) are compositionally biased toward basic and acidic residues. Residues 1–30 (MLEGIEREAAEHSNGCSGPAGHAPPAGAPR) are disordered. In terms of domain architecture, Radical SAM core spans 64 to 283 (HEVQLCTLLS…IAVARVMMPR (220 aa)). Residues C79, C83, and C86 each coordinate [4Fe-4S] cluster. Positions 123, 155, 215, and 287 each coordinate [2Fe-2S] cluster.

The protein belongs to the radical SAM superfamily. Biotin synthase family. In terms of assembly, homodimer. Requires [4Fe-4S] cluster as cofactor. It depends on [2Fe-2S] cluster as a cofactor.

The catalysed reaction is (4R,5S)-dethiobiotin + (sulfur carrier)-SH + 2 reduced [2Fe-2S]-[ferredoxin] + 2 S-adenosyl-L-methionine = (sulfur carrier)-H + biotin + 2 5'-deoxyadenosine + 2 L-methionine + 2 oxidized [2Fe-2S]-[ferredoxin]. It participates in cofactor biosynthesis; biotin biosynthesis; biotin from 7,8-diaminononanoate: step 2/2. Catalyzes the conversion of dethiobiotin (DTB) to biotin by the insertion of a sulfur atom into dethiobiotin via a radical-based mechanism. The polypeptide is Biotin synthase (Sorangium cellulosum (strain So ce56) (Polyangium cellulosum (strain So ce56))).